Reading from the N-terminus, the 650-residue chain is DNA ligase (650 aa).

NAD(+) is bound by residues 30–34 (DEQYD) and 79–80 (SL). The active-site N6-AMP-lysine intermediate is Lys110. Arg131, Glu165, and Lys304 together coordinate NAD(+). Cys398, Cys401, Cys414, and Cys419 together coordinate Zn(2+). The BRCT domain occupies 573 to 650 (DNNNVFFNKT…EEEFLAQINK (78 aa)).

It belongs to the NAD-dependent DNA ligase family. LigA subfamily. Mg(2+) serves as cofactor. Requires Mn(2+) as cofactor.

It carries out the reaction NAD(+) + (deoxyribonucleotide)n-3'-hydroxyl + 5'-phospho-(deoxyribonucleotide)m = (deoxyribonucleotide)n+m + AMP + beta-nicotinamide D-nucleotide.. Its function is as follows. DNA ligase that catalyzes the formation of phosphodiester linkages between 5'-phosphoryl and 3'-hydroxyl groups in double-stranded DNA using NAD as a coenzyme and as the energy source for the reaction. It is essential for DNA replication and repair of damaged DNA. The chain is DNA ligase from Helicobacter hepaticus (strain ATCC 51449 / 3B1).